The primary structure comprises 103 residues: Large ribosomal subunit protein bL21 (103 aa).

The protein belongs to the bacterial ribosomal protein bL21 family. As to quaternary structure, part of the 50S ribosomal subunit. Contacts protein L20.

This protein binds to 23S rRNA in the presence of protein L20. In Borreliella burgdorferi (strain ZS7) (Borrelia burgdorferi), this protein is Large ribosomal subunit protein bL21.